The primary structure comprises 382 residues: Putative NADPH dehydrogenase C5H10.04 (382 aa).

FMN-binding residues include threonine 28 and histidine 189. Substrate is bound by residues histidine 189 and asparagine 192. Arginine 242 and arginine 334 together coordinate FMN. A substrate-binding site is contributed by tyrosine 361.

Belongs to the NADH:flavin oxidoreductase/NADH oxidase family. In terms of assembly, homodimer or heterodimer. Requires FMN as cofactor.

It catalyses the reaction A + NADPH + H(+) = AH2 + NADP(+). This is Putative NADPH dehydrogenase C5H10.04 from Schizosaccharomyces pombe (strain 972 / ATCC 24843) (Fission yeast).